The chain runs to 39 residues: Photosystem II reaction center protein X (39 aa).

A helical membrane pass occupies residues 10-30 (WSLVLGAAIVLIPATIGLIFI).

It belongs to the PsbX family. Type 1 subfamily. PSII is composed of 1 copy each of membrane proteins PsbA, PsbB, PsbC, PsbD, PsbE, PsbF, PsbH, PsbI, PsbJ, PsbK, PsbL, PsbM, PsbT, PsbX, PsbY, PsbZ, Psb30/Ycf12, peripheral proteins PsbO, CyanoQ (PsbQ), PsbU, PsbV and a large number of cofactors. It forms dimeric complexes.

Its subcellular location is the cellular thylakoid membrane. In terms of biological role, involved in the binding and/or turnover of quinones at the Q(B) site of photosystem II (PSII). PSII is a light-driven water plastoquinone oxidoreductase, using light energy to abstract electrons from H(2)O, generating a proton gradient subsequently used for ATP formation. In Microcystis aeruginosa (strain NIES-843 / IAM M-2473), this protein is Photosystem II reaction center protein X.